The following is a 268-amino-acid chain: Tryptophan synthase alpha chain (268 aa).

Residues Glu49 and Asp60 each act as proton acceptor in the active site.

Belongs to the TrpA family. As to quaternary structure, tetramer of two alpha and two beta chains.

It carries out the reaction (1S,2R)-1-C-(indol-3-yl)glycerol 3-phosphate + L-serine = D-glyceraldehyde 3-phosphate + L-tryptophan + H2O. The protein operates within amino-acid biosynthesis; L-tryptophan biosynthesis; L-tryptophan from chorismate: step 5/5. The alpha subunit is responsible for the aldol cleavage of indoleglycerol phosphate to indole and glyceraldehyde 3-phosphate. The chain is Tryptophan synthase alpha chain from Pseudomonas aeruginosa (strain ATCC 15692 / DSM 22644 / CIP 104116 / JCM 14847 / LMG 12228 / 1C / PRS 101 / PAO1).